Reading from the N-terminus, the 149-residue chain is D-aminoacyl-tRNA deacylase (149 aa).

A Gly-cisPro motif, important for rejection of L-amino acids motif is present at residues 137–138 (GP).

It belongs to the DTD family. As to quaternary structure, homodimer.

It localises to the cytoplasm. The enzyme catalyses glycyl-tRNA(Ala) + H2O = tRNA(Ala) + glycine + H(+). The catalysed reaction is a D-aminoacyl-tRNA + H2O = a tRNA + a D-alpha-amino acid + H(+). An aminoacyl-tRNA editing enzyme that deacylates mischarged D-aminoacyl-tRNAs. Also deacylates mischarged glycyl-tRNA(Ala), protecting cells against glycine mischarging by AlaRS. Acts via tRNA-based rather than protein-based catalysis; rejects L-amino acids rather than detecting D-amino acids in the active site. By recycling D-aminoacyl-tRNA to D-amino acids and free tRNA molecules, this enzyme counteracts the toxicity associated with the formation of D-aminoacyl-tRNA entities in vivo and helps enforce protein L-homochirality. This chain is D-aminoacyl-tRNA deacylase, found in Thermotoga petrophila (strain ATCC BAA-488 / DSM 13995 / JCM 10881 / RKU-1).